We begin with the raw amino-acid sequence, 109 residues long: EPIDERMAL PATTERNING FACTOR-like protein 4 (109 aa).

A signal peptide spans 1-26 (MGTFRRRRRFLLAALVTFALLHLFSA). 3 disulfide bridges follow: cysteine 66-cysteine 100, cysteine 70-cysteine 76, and cysteine 73-cysteine 102.

The protein belongs to the plant cysteine rich small secretory peptide family. Epidermal patterning factor subfamily. As to quaternary structure, interacts with ERECTA. Expressed at the base of the apical meristem at 3 days after germination. Not detected in the hypocotyl. Expressed in developing stems soon after bolting, in inflorescence stems and in young siliques.

It is found in the secreted. Acts primarily as positive regulator of inflorescence growth. Endodermal expression is sufficient for proper inflorescence architecture. Redundantly involved with EPFL6 in procambial development regulation. Controls stomatal patterning. Mediates stomatal development inhibition. TMM (AC Q9SSD1) functions to dampen or block CLL2 signaling. Acts as a growth-regulatory ligand for ERECTA family receptors. This Arabidopsis thaliana (Mouse-ear cress) protein is EPIDERMAL PATTERNING FACTOR-like protein 4.